A 285-amino-acid chain; its full sequence is NADPH-dependent 7-cyano-7-deazaguanine reductase (285 aa).

Position 91–93 (91–93 (IES)) interacts with substrate. NADPH is bound at residue 93–94 (SK). C191 serves as the catalytic Thioimide intermediate. The active-site Proton donor is the D198. 230 to 231 (HE) serves as a coordination point for substrate. 259 to 260 (RG) is an NADPH binding site.

It belongs to the GTP cyclohydrolase I family. QueF type 2 subfamily. In terms of assembly, homodimer.

It localises to the cytoplasm. It catalyses the reaction 7-aminomethyl-7-carbaguanine + 2 NADP(+) = 7-cyano-7-deazaguanine + 2 NADPH + 3 H(+). The protein operates within tRNA modification; tRNA-queuosine biosynthesis. In terms of biological role, catalyzes the NADPH-dependent reduction of 7-cyano-7-deazaguanine (preQ0) to 7-aminomethyl-7-deazaguanine (preQ1). This Legionella pneumophila (strain Corby) protein is NADPH-dependent 7-cyano-7-deazaguanine reductase.